Here is a 316-residue protein sequence, read N- to C-terminus: Pentatricopeptide repeat-containing protein At1g19525 (316 aa).

6 PPR repeats span residues 9 to 43 (DILTATALVHMYSKSGNFERATEAFENLKSYGLRP), 44 to 78 (DEKIYEAMILGYVNAGKPKLGERLMKEMQAKELKA), 79 to 113 (SEEVYMALLRAYAQMGDANGAAGISSSMQYASDGP), 115 to 149 (SFEAYSLFVEAYGKAGQVDKAKSNFDEMRKLGHKP), 150 to 184 (DDKCIANLVRAYKGENSLDKALRLLLQLEKDGIEI), and 185 to 219 (GVITYTVLVDWMANLGLIEEAEQLLVKISQLGEAP).

This sequence belongs to the PPR family. P subfamily.

This Arabidopsis thaliana (Mouse-ear cress) protein is Pentatricopeptide repeat-containing protein At1g19525.